The following is a 241-amino-acid chain: Small ribosomal subunit protein eS4 (241 aa).

The 64-residue stretch at Leu-37–Lys-100 folds into the S4 RNA-binding domain.

Belongs to the eukaryotic ribosomal protein eS4 family.

This Methanospirillum hungatei JF-1 (strain ATCC 27890 / DSM 864 / NBRC 100397 / JF-1) protein is Small ribosomal subunit protein eS4.